A 437-amino-acid chain; its full sequence is F-box protein At3g62430 (437 aa).

In terms of domain architecture, F-box spans 1–49 (MDRISNLPDGVIYRVISLLSTKEATCLKYTSKNWLNLVTIIPIAVFVDS).

This chain is F-box protein At3g62430, found in Arabidopsis thaliana (Mouse-ear cress).